Reading from the N-terminus, the 338-residue chain is GDSL esterase/lipase At5g63170 (338 aa).

Residues 1–23 (MNSLVIQTTIVLVSVISVSIVHA) form the signal peptide. The Nucleophile role is filled by S35. Active-site residues include D313 and H316.

This sequence belongs to the 'GDSL' lipolytic enzyme family.

It localises to the secreted. The chain is GDSL esterase/lipase At5g63170 from Arabidopsis thaliana (Mouse-ear cress).